We begin with the raw amino-acid sequence, 367 residues long: Undecaprenyl-phosphate alpha-N-acetylglucosaminyl 1-phosphate transferase (367 aa).

10 helical membrane-spanning segments follow: residues 3–23 (LLTV…FLFF), 46–66 (LIPL…FGIV), 69–89 (YIPH…IGAL), 132–152 (VLGP…INAF), 158–178 (IDGL…MILW), 187–207 (IWCF…LGIL), 213–233 (VFMG…ILLE), 242–262 (ISPV…VAIM), 294–314 (AFVL…LAEY), and 318–338 (VPEW…GYCI).

This sequence belongs to the glycosyltransferase 4 family. WecA subfamily. Requires Mg(2+) as cofactor. The cofactor is Mn(2+).

The protein resides in the cell inner membrane. It carries out the reaction di-trans,octa-cis-undecaprenyl phosphate + UDP-N-acetyl-alpha-D-glucosamine = N-acetyl-alpha-D-glucosaminyl-di-trans,octa-cis-undecaprenyl diphosphate + UMP. The protein operates within bacterial outer membrane biogenesis; LPS O-antigen biosynthesis. It functions in the pathway bacterial outer membrane biogenesis; enterobacterial common antigen biosynthesis. Its function is as follows. Catalyzes the transfer of the GlcNAc-1-phosphate moiety from UDP-GlcNAc onto the carrier lipid undecaprenyl phosphate (C55-P), yielding GlcNAc-pyrophosphoryl-undecaprenyl (GlcNAc-PP-C55). The polypeptide is Undecaprenyl-phosphate alpha-N-acetylglucosaminyl 1-phosphate transferase (Escherichia coli O157:H7).